Reading from the N-terminus, the 277-residue chain is Ribonuclease HII (277 aa).

The interval 1-32 (MIRNQANKPGRAKAATAARKSPLTKSAAKPAA) is disordered. Positions 20–32 (KSPLTKSAAKPAA) are enriched in low complexity. The 189-residue stretch at 64 to 252 (WPVAGCDEAG…VVAARRKHQP (189 aa)) folds into the RNase H type-2 domain. The a divalent metal cation site is built by Asp-70, Glu-71, and Asp-161.

The protein belongs to the RNase HII family. Mn(2+) is required as a cofactor. Mg(2+) serves as cofactor.

It is found in the cytoplasm. The catalysed reaction is Endonucleolytic cleavage to 5'-phosphomonoester.. In terms of biological role, endonuclease that specifically degrades the RNA of RNA-DNA hybrids. In Bradyrhizobium sp. (strain ORS 278), this protein is Ribonuclease HII.